The following is a 299-amino-acid chain: Probable alpha-L-glutamate ligase (299 aa).

In terms of domain architecture, ATP-grasp spans 111–293; that stretch reads LQALAAANIA…VATQMIAYLE (183 aa). Residues Lys147, 184-185, Asp193, and 217-219 each bind ATP; these read DF and RAN. Residues Asp254, Glu266, and Asn268 each coordinate Mg(2+). Mn(2+) contacts are provided by Asp254, Glu266, and Asn268.

It belongs to the RimK family. Mg(2+) serves as cofactor. Mn(2+) is required as a cofactor.

The sequence is that of Probable alpha-L-glutamate ligase from Mannheimia succiniciproducens (strain KCTC 0769BP / MBEL55E).